A 236-amino-acid polypeptide reads, in one-letter code: Cyclin-P3-1 (236 aa).

The protein belongs to the cyclin family. Cyclin U/P subfamily.

This is Cyclin-P3-1 (CYCP3-1) from Oryza sativa subsp. japonica (Rice).